A 387-amino-acid chain; its full sequence is S-adenosylmethionine synthase (387 aa).

H15 contributes to the ATP binding site. D17 is a Mg(2+) binding site. Residue E43 coordinates K(+). Residues E56 and Q99 each contribute to the L-methionine site. The segment at 99-109 (QSPDIAQGVNR) is flexible loop. Residues 166-168 (DAK), 232-233 (RF), D241, 247-248 (RK), A264, and K268 each bind ATP. D241 contributes to the L-methionine binding site. K272 lines the L-methionine pocket.

The protein belongs to the AdoMet synthase family. As to quaternary structure, homotetramer; dimer of dimers. Mg(2+) serves as cofactor. It depends on K(+) as a cofactor.

The protein localises to the cytoplasm. The catalysed reaction is L-methionine + ATP + H2O = S-adenosyl-L-methionine + phosphate + diphosphate. Its pathway is amino-acid biosynthesis; S-adenosyl-L-methionine biosynthesis; S-adenosyl-L-methionine from L-methionine: step 1/1. In terms of biological role, catalyzes the formation of S-adenosylmethionine (AdoMet) from methionine and ATP. The overall synthetic reaction is composed of two sequential steps, AdoMet formation and the subsequent tripolyphosphate hydrolysis which occurs prior to release of AdoMet from the enzyme. This Nitrosomonas europaea (strain ATCC 19718 / CIP 103999 / KCTC 2705 / NBRC 14298) protein is S-adenosylmethionine synthase.